We begin with the raw amino-acid sequence, 53 residues long: UPF0391 membrane protein gsr2640 (53 aa).

2 consecutive transmembrane segments (helical) span residues 4–24 (LLWL…GGVV) and 32–49 (WFLI…FVTG).

Belongs to the UPF0391 family.

The protein localises to the cell membrane. The chain is UPF0391 membrane protein gsr2640 from Gloeobacter violaceus (strain ATCC 29082 / PCC 7421).